Here is a 208-residue protein sequence, read N- to C-terminus: uncharacterized protein (208 aa).

Transmembrane regions (helical) follow at residues 5-25 (VIGI…KEAW), 41-61 (MLLI…IAAL), 69-89 (ANGI…LFFL), 123-143 (VLLG…ICGL), 150-170 (VFFF…TIAG), and 176-196 (NKLL…LVIY).

The protein resides in the cell membrane. This is an uncharacterized protein from Bacillus subtilis (strain 168).